The following is a 118-amino-acid chain: Large ribosomal subunit protein uL24 (118 aa).

Belongs to the universal ribosomal protein uL24 family. Part of the 50S ribosomal subunit.

Its function is as follows. One of two assembly initiator proteins, it binds directly to the 5'-end of the 23S rRNA, where it nucleates assembly of the 50S subunit. In terms of biological role, one of the proteins that surrounds the polypeptide exit tunnel on the outside of the subunit. This chain is Large ribosomal subunit protein uL24, found in Prochlorococcus marinus (strain AS9601).